The primary structure comprises 424 residues: Hemagglutinin-esterase (424 aa).

The signal sequence occupies residues 1–16; it reads MFLLPRFILVSCIIGS. An esterase domain 1 region spans residues 7–127; sequence FILVSCIIGS…SNDIWMQNKG (121 aa). Residues 17–392 lie on the Virion surface side of the membrane; sequence LGFYNPPTNV…PICVYDPLPV (376 aa). S40 functions as the Nucleophile in the catalytic mechanism. C44 and C65 form a disulfide bridge. N54, N89, N114, N153, N236, and N301 each carry an N-linked (GlcNAc...) asparagine; by host glycan. 3 disulfide bridges follow: C113–C162, C197–C276, and C205–C249. The receptor binding stretch occupies residues 128–266; the sequence is LFYTQVYKNM…GNYLAISNEL (139 aa). The interval 267–379 is esterase domain 2; sequence LLTVPTKAIC…RCPTAADINN (113 aa). Residues C307 and C312 are joined by a disulfide bond. N-linked (GlcNAc...) asparagine; by host glycosylation occurs at N316. Catalysis depends on charge relay system residues D326 and H329. The cysteines at positions 347 and 371 are disulfide-linked. Residue N358 is glycosylated (N-linked (GlcNAc...) asparagine; by host). The chain crosses the membrane as a helical span at residues 393-413; sequence ILLGILLGVAVIIIVVLLLYF. Residues 414-424 are Intravirion-facing; the sequence is MVDNGTRLHDA. N417 is a glycosylation site (N-linked (GlcNAc...) asparagine; by host).

It belongs to the influenza type C/coronaviruses hemagglutinin-esterase family. In terms of assembly, homodimer; disulfide-linked. Forms a complex with the M protein in the pre-Golgi. Associates then with S-M complex to form a ternary complex S-M-HE. N-glycosylated in the host RER.

It localises to the virion membrane. The protein resides in the host cell membrane. It catalyses the reaction N-acetyl-9-O-acetylneuraminate + H2O = N-acetylneuraminate + acetate + H(+). The enzyme catalyses N-acetyl-4-O-acetylneuraminate + H2O = N-acetylneuraminate + acetate + H(+). Its function is as follows. Structural protein that makes short spikes at the surface of the virus. Contains receptor binding and receptor-destroying activities. Mediates de-O-acetylation of N-acetyl-4-O-acetylneuraminic acid, which is probably the receptor determinant recognized by the virus on the surface of erythrocytes and susceptible cells. This receptor-destroying activity is important for virus release as it probably helps preventing self-aggregation and ensures the efficient spread of the progeny virus from cell to cell. May serve as a secondary viral attachment protein for initiating infection, the spike protein being the major one. May become a target for both the humoral and the cellular branches of the immune system. This is Hemagglutinin-esterase from Homo sapiens (Human).